We begin with the raw amino-acid sequence, 154 residues long: 3-hydroxyacyl-[acyl-carrier-protein] dehydratase FabZ (154 aa).

H54 is a catalytic residue.

This sequence belongs to the thioester dehydratase family. FabZ subfamily.

Its subcellular location is the cytoplasm. It catalyses the reaction a (3R)-hydroxyacyl-[ACP] = a (2E)-enoyl-[ACP] + H2O. In terms of biological role, involved in unsaturated fatty acids biosynthesis. Catalyzes the dehydration of short chain beta-hydroxyacyl-ACPs and long chain saturated and unsaturated beta-hydroxyacyl-ACPs. This is 3-hydroxyacyl-[acyl-carrier-protein] dehydratase FabZ from Shewanella oneidensis (strain ATCC 700550 / JCM 31522 / CIP 106686 / LMG 19005 / NCIMB 14063 / MR-1).